The following is a 224-amino-acid chain: Zinc finger C4H2 domain-containing protein (224 aa).

Positions 12 to 97 (ENIKEIRNKT…NKLLESTRRL (86 aa)) form a coiled coil. Disordered stretches follow at residues 166 to 185 (QAARKQDARQTATFRQQPPP) and 204 to 224 (PLCKAKSRSRNPKKPKRKPDE). Residues 189–206 (CLSCHQQIHRNAPICPLC) form a C4H2-type zinc finger. Over residues 208 to 224 (AKSRSRNPKKPKRKPDE) the composition is skewed to basic residues.

The protein resides in the nucleus. It localises to the cytoplasm. It is found in the postsynaptic cell membrane. Its function is as follows. Plays a role in GABAergic and V2 interneurons differentiation. Involved in motoneuron development and in neuromuscular junction formation. This Danio rerio (Zebrafish) protein is Zinc finger C4H2 domain-containing protein (zc4h2).